An 83-amino-acid chain; its full sequence is Large ribosomal subunit protein bL31 (83 aa).

Belongs to the bacterial ribosomal protein bL31 family. Type A subfamily. In terms of assembly, part of the 50S ribosomal subunit.

In terms of biological role, binds the 23S rRNA. The sequence is that of Large ribosomal subunit protein bL31 from Synechococcus sp. (strain CC9605).